The chain runs to 110 residues: Large ribosomal subunit protein uL22 (110 aa).

Belongs to the universal ribosomal protein uL22 family. As to quaternary structure, part of the 50S ribosomal subunit.

Its function is as follows. This protein binds specifically to 23S rRNA; its binding is stimulated by other ribosomal proteins, e.g. L4, L17, and L20. It is important during the early stages of 50S assembly. It makes multiple contacts with different domains of the 23S rRNA in the assembled 50S subunit and ribosome. Functionally, the globular domain of the protein is located near the polypeptide exit tunnel on the outside of the subunit, while an extended beta-hairpin is found that lines the wall of the exit tunnel in the center of the 70S ribosome. The protein is Large ribosomal subunit protein uL22 of Buchnera aphidicola subsp. Acyrthosiphon pisum (strain 5A).